The sequence spans 180 residues: ATP synthase subunit delta 2 (180 aa).

This sequence belongs to the ATPase delta chain family. As to quaternary structure, F-type ATPases have 2 components, F(1) - the catalytic core - and F(0) - the membrane proton channel. F(1) has five subunits: alpha(3), beta(3), gamma(1), delta(1), epsilon(1). F(0) has three main subunits: a(1), b(2) and c(10-14). The alpha and beta chains form an alternating ring which encloses part of the gamma chain. F(1) is attached to F(0) by a central stalk formed by the gamma and epsilon chains, while a peripheral stalk is formed by the delta and b chains.

Its subcellular location is the cell inner membrane. Its function is as follows. F(1)F(0) ATP synthase produces ATP from ADP in the presence of a proton or sodium gradient. F-type ATPases consist of two structural domains, F(1) containing the extramembraneous catalytic core and F(0) containing the membrane proton channel, linked together by a central stalk and a peripheral stalk. During catalysis, ATP synthesis in the catalytic domain of F(1) is coupled via a rotary mechanism of the central stalk subunits to proton translocation. Functionally, this protein is part of the stalk that links CF(0) to CF(1). It either transmits conformational changes from CF(0) to CF(1) or is implicated in proton conduction. The chain is ATP synthase subunit delta 2 from Vibrio campbellii (strain ATCC BAA-1116).